The chain runs to 402 residues: Protochlorophyllide reductase B, chloroplastic (402 aa).

It belongs to the short-chain dehydrogenases/reductases (SDR) family. POR subfamily.

Its subcellular location is the plastid. It is found in the chloroplast. The enzyme catalyses chlorophyllide a + NADP(+) = protochlorophyllide a + NADPH + H(+). It participates in porphyrin-containing compound metabolism; chlorophyll biosynthesis. Its function is as follows. Phototransformation of protochlorophyllide (Pchlide) to chlorophyllide (Chlide). The sequence is that of Protochlorophyllide reductase B, chloroplastic (PORB) from Oryza sativa subsp. japonica (Rice).